A 169-amino-acid chain; its full sequence is Photosystem I assembly protein Ycf3 (169 aa).

TPR repeat units lie at residues Ala36–Pro69, Ser73–Leu106, and Gly121–Asn154.

Belongs to the Ycf3 family.

Its subcellular location is the plastid. The protein localises to the chloroplast thylakoid membrane. Functionally, essential for the assembly of the photosystem I (PSI) complex. May act as a chaperone-like factor to guide the assembly of the PSI subunits. This chain is Photosystem I assembly protein Ycf3, found in Cucumis sativus (Cucumber).